The sequence spans 174 residues: Eukaryotic translation elongation factor 1 epsilon-1 (174 aa).

An N-acetylalanine modification is found at Ala-2. The segment at 2-56 (AAAAELRLLEKSLGLKPGNKYSAQGERQIPVLQTNNGPSLMGLSTIATHLVKQAS) is N-terminal. The 124-residue stretch at 50 to 173 (HLVKQASKEH…FIKNRLYANS (124 aa)) folds into the GST C-terminal domain. Residues 57–63 (KEHLLGS) form a linker region. Positions 64–152 (TAEEKAMVQQ…SRWFCHIQHY (89 aa)) are C-terminal. The residue at position 138 (Lys-138) is an N6-acetyllysine. Residues 153-169 (PDIRQHLSSIVFIKNRL) adopt a coiled-coil conformation.

In terms of assembly, part of a multisubunit complex that groups tRNA ligases for Arg (RARS1), Asp (DARS1), Gln (QARS1), Ile (IARS1), Leu (LARS1), Lys (KARS1), Met (MARS1) the bifunctional ligase for Glu and Pro (EPRS1) and the auxiliary subunits AIMP1/p43, AIMP2/p38 and EEF1E1/p18. Can interact simultaneously with MARS1 and EPRS1. Forms a linear complex that contains MARS1, EEF1E1, EPRS1 and AIMP2 that is at the core of the multisubunit complex. Interacts with ATM and ATR. The interaction with ATM, which takes place independently of TP53, is induced by DNA damage that may occur during genotoxic stress or cell growth. The interaction with ATR is enhanced by UV irradiation.

Its subcellular location is the cytoplasm. The protein localises to the nucleus. Its function is as follows. Positive modulator of ATM response to DNA damage. This Mus musculus (Mouse) protein is Eukaryotic translation elongation factor 1 epsilon-1 (Eef1e1).